Here is a 297-residue protein sequence, read N- to C-terminus: tRNA pseudouridine synthase B (297 aa).

Aspartate 44 acts as the Nucleophile in catalysis.

The protein belongs to the pseudouridine synthase TruB family. Type 1 subfamily.

The enzyme catalyses uridine(55) in tRNA = pseudouridine(55) in tRNA. Responsible for synthesis of pseudouridine from uracil-55 in the psi GC loop of transfer RNAs. This Corynebacterium efficiens (strain DSM 44549 / YS-314 / AJ 12310 / JCM 11189 / NBRC 100395) protein is tRNA pseudouridine synthase B.